The following is a 459-amino-acid chain: Hemopexin (459 aa).

An N-terminal signal peptide occupies residues 1 to 23 (MARALRVPVALWLLGLCWSLAKA). Disulfide bonds link cysteine 52–cysteine 232, cysteine 150–cysteine 155, and cysteine 189–cysteine 201. Hemopexin repeat units lie at residues 55-95 (GWGF…WKDA), 96-140 (PSPV…FPGI), 141-185 (PFPL…SWPA), and 186-232 (VGNC…FMSC). Histidine 81 is a binding site for heme. Histidine 151 provides a ligand contact to heme. A glycan (N-linked (GlcNAc...) asparagine) is linked at asparagine 188. Asparagine 218 carries an N-linked (GlcNAc...) asparagine glycan. Histidine 237 lines the heme pocket. Asparagine 241 carries an N-linked (GlcNAc...) asparagine glycan. Disulfide bonds link cysteine 250/cysteine 453, cysteine 359/cysteine 401, and cysteine 411/cysteine 428. Hemopexin repeat units lie at residues 252-297 (PHLV…WPQG), 298-345 (PSTV…FGSP), 350-389 (LHSV…WTEL), and 393-444 (HTKV…LPQA). Histidine 286 is a heme binding site.

The protein belongs to the hemopexin family.

It localises to the secreted. Binds heme and transports it to the liver for breakdown and iron recovery, after which the free hemopexin returns to the circulation. This Bos taurus (Bovine) protein is Hemopexin (HPX).